The following is a 417-amino-acid chain: Serine hydroxymethyltransferase (417 aa).

Lysine 54 is modified (N6-acetyllysine). Residues leucine 121 and 125–127 contribute to the (6S)-5,6,7,8-tetrahydrofolate site; that span reads GHL. Lysine 229 is subject to N6-(pyridoxal phosphate)lysine. An N6-acetyllysine mark is found at lysine 250, lysine 285, and lysine 354. 355–357 contributes to the (6S)-5,6,7,8-tetrahydrofolate binding site; it reads SPF. Lysine 375 carries the post-translational modification N6-acetyllysine.

It belongs to the SHMT family. In terms of assembly, homodimer. Pyridoxal 5'-phosphate serves as cofactor.

It is found in the cytoplasm. It carries out the reaction (6R)-5,10-methylene-5,6,7,8-tetrahydrofolate + glycine + H2O = (6S)-5,6,7,8-tetrahydrofolate + L-serine. It participates in one-carbon metabolism; tetrahydrofolate interconversion. The protein operates within amino-acid biosynthesis; glycine biosynthesis; glycine from L-serine: step 1/1. Functionally, catalyzes the reversible interconversion of serine and glycine with tetrahydrofolate (THF) serving as the one-carbon carrier. This reaction serves as the major source of one-carbon groups required for the biosynthesis of purines, thymidylate, methionine, and other important biomolecules. Also exhibits THF-independent aldolase activity toward beta-hydroxyamino acids, producing glycine and aldehydes, via a retro-aldol mechanism. The chain is Serine hydroxymethyltransferase from Shigella dysenteriae serotype 1 (strain Sd197).